The sequence spans 245 residues: Protein OXIDATIVE STRESS 3 LIKE 6 (245 aa).

Residues 46–90 (QIGIGLRMSNNNNKSPEESSDSSSSIGESSENEEEEEEDDAVSCQ) are disordered. The span at 75 to 86 (SENEEEEEEDDA) shows a compositional bias: acidic residues. Residues 143-151 (NKRRRLVIA) carry the Nuclear localization signal motif. Residues 203-230 (DDHRKIMMMMKNKKELMAQTRSCFCLSS) form a kinase-inducible domain (KID) region.

Its subcellular location is the nucleus. Its function is as follows. Probable transcription factor. Promotes slightly the tolerance to cadmium (Cd) and to oxidizing chemicals (e.g. diamide). The polypeptide is Protein OXIDATIVE STRESS 3 LIKE 6 (Arabidopsis thaliana (Mouse-ear cress)).